The primary structure comprises 296 residues: Diaminopimelate epimerase (296 aa).

Substrate contacts are provided by asparagine 17, glutamine 49, and asparagine 69. The active-site Proton donor is the cysteine 78. Residues 79–80 (GN), asparagine 171, asparagine 205, and 223–224 (ER) each bind substrate. Cysteine 232 functions as the Proton acceptor in the catalytic mechanism. Position 233-234 (233-234 (GT)) interacts with substrate.

The protein belongs to the diaminopimelate epimerase family. Homodimer.

It is found in the cytoplasm. It catalyses the reaction (2S,6S)-2,6-diaminopimelate = meso-2,6-diaminopimelate. Its pathway is amino-acid biosynthesis; L-lysine biosynthesis via DAP pathway; DL-2,6-diaminopimelate from LL-2,6-diaminopimelate: step 1/1. Functionally, catalyzes the stereoinversion of LL-2,6-diaminopimelate (L,L-DAP) to meso-diaminopimelate (meso-DAP), a precursor of L-lysine and an essential component of the bacterial peptidoglycan. This Methylorubrum extorquens (strain CM4 / NCIMB 13688) (Methylobacterium extorquens) protein is Diaminopimelate epimerase.